Reading from the N-terminus, the 423-residue chain is METRGIEQMFDFQRLPNDRFILLLLLLYAPVGFCLMLLRIFIGVHVFLVSCALPDSIVRRFIVRIMCSVLGLHVQQNSPRLRDKTTRLYVCNHVTHFDHNIINLLTSCNTPLLEGPVGFLCWARGFMELGQGVGSRTELTETLHRYCSSPDTLPLLLFPEEDTTNGRTGLLKFSSWPFSVSDSIQPVALLVKRPFIAVSTPESSWLTELLWTFFVPFTVYHVRWLPPLSKEDGETHQEFASKVQGLLATELGVISTQITKADKAEHIKRKRHSAPQTAHSNLGARPRTVAQGFLGTSVGAEDSRIARLAQQVKEVLPDVPVSVITRDLLQTNCVDTTITNLLERTDQFNSEAAMTMPSGPGKAAASSTPSAMVSSPNLKPAAKSFGRSPIDRHMSLQERKEALYEYARRRYIEKHGLNKEDDL.

The Cytoplasmic segment spans residues 1–19; the sequence is METRGIEQMFDFQRLPNDR. The stretch at 20–40 is an intramembrane region; that stretch reads FILLLLLLYAPVGFCLMLLRI. Over 41–423 the chain is Cytoplasmic; it reads FIGVHVFLVS…KHGLNKEDDL (383 aa). The CUE domain occupies 304 to 346; that stretch reads RIARLAQQVKEVLPDVPVSVITRDLLQTNCVDTTITNLLERTD. Positions 355–392 are disordered; it reads TMPSGPGKAAASSTPSAMVSSPNLKPAAKSFGRSPIDR. The span at 365–377 shows a compositional bias: polar residues; the sequence is ASSTPSAMVSSPN.

Belongs to the AUP1 family.

The protein resides in the endoplasmic reticulum membrane. It is found in the lipid droplet. In terms of biological role, plays a role in the translocation of terminally misfolded proteins from the endoplasmic reticulum lumen to the cytoplasm and their degradation by the proteasome. Plays a role in lipid droplet formation. Induces lipid droplet clustering. This chain is Lipid droplet-regulating VLDL assembly factor AUP1, found in Danio rerio (Zebrafish).